The following is a 105-amino-acid chain: Co-chaperonin GroES (105 aa).

The protein belongs to the GroES chaperonin family. As to quaternary structure, heptamer of 7 subunits arranged in a ring. Interacts with the chaperonin GroEL.

It is found in the cytoplasm. In terms of biological role, together with the chaperonin GroEL, plays an essential role in assisting protein folding. The GroEL-GroES system forms a nano-cage that allows encapsulation of the non-native substrate proteins and provides a physical environment optimized to promote and accelerate protein folding. GroES binds to the apical surface of the GroEL ring, thereby capping the opening of the GroEL channel. In Parvibaculum lavamentivorans (strain DS-1 / DSM 13023 / NCIMB 13966), this protein is Co-chaperonin GroES.